Consider the following 465-residue polypeptide: Branched-chain amino acid permease BcaP (465 aa).

12 helical membrane passes run 28–48, 56–76, 88–110, 149–169, 181–201, 219–239, 259–279, 309–329, 359–379, 380–400, 416–436, and 438–458; these read FLALGVGTIISTSIFTLPGQV, GVVFSYLLAALVAGFVALAYA, AYSWISVLFGEGFGWIAGWALLA, DGGIVDIISLLVILLSAIIVF, ILVVLKVAAVIAFIIVGITVI, FGGFSGIWSGVSMIFLAYIGF, GIIGSLLIAVVLFAAVTLVLV, VVTAIALAGMFIALLGMVLAG, VWTLAIVAIVIGAFFPFAFLA, QLISAGTLIAFMFVTLGIYSL, PFYPVLPALGFIGSLFVFWGL, and VQAKLYSGIWFLIGIAIYFAY.

Belongs to the amino acid-polyamine-organocation (APC) superfamily.

The protein resides in the cell membrane. Its function is as follows. Branched-chain amino acid transport system that specifically transports branched-chain amino acids (BCAAs) (isoleucine, leucine and valine) and, to a lesser extent, methionine. Important for CodY-mediated regulation, and required for optimal growth in media containing free amino acids as the only amino acid source. The sequence is that of Branched-chain amino acid permease BcaP from Lactococcus lactis subsp. cremoris (strain MG1363).